Here is a 278-residue protein sequence, read N- to C-terminus: Non-homologous end joining protein Ku (278 aa).

In terms of domain architecture, Ku spans 9–172 (ISFGLVNIPV…MHFAQELVDV (164 aa)). Positions 255–278 (NQTGAGAKKKPAKTAKRGKSRKAA) are disordered. The segment covering 261–278 (AKKKPAKTAKRGKSRKAA) has biased composition (basic residues).

It belongs to the prokaryotic Ku family. As to quaternary structure, homodimer. Interacts with LigD.

Functionally, with LigD forms a non-homologous end joining (NHEJ) DNA repair enzyme, which repairs dsDNA breaks with reduced fidelity. Binds linear dsDNA with 5'- and 3'- overhangs but not closed circular dsDNA nor ssDNA. Recruits and stimulates the ligase activity of LigD. This Opitutus terrae (strain DSM 11246 / JCM 15787 / PB90-1) protein is Non-homologous end joining protein Ku.